The primary structure comprises 234 residues: Purine nucleoside phosphorylase DeoD-type (234 aa).

His-5 is an a purine D-ribonucleoside binding site. Phosphate-binding positions include Gly-21, Arg-25, Arg-44, and 88 to 91 (RVGT). A purine D-ribonucleoside-binding positions include 178-180 (EME) and 202-203 (SD). Residue Asp-203 is the Proton donor of the active site.

The protein belongs to the PNP/UDP phosphorylase family. In terms of assembly, homohexamer; trimer of homodimers.

The enzyme catalyses a purine D-ribonucleoside + phosphate = a purine nucleobase + alpha-D-ribose 1-phosphate. It carries out the reaction a purine 2'-deoxy-D-ribonucleoside + phosphate = a purine nucleobase + 2-deoxy-alpha-D-ribose 1-phosphate. In terms of biological role, catalyzes the reversible phosphorolytic breakdown of the N-glycosidic bond in the beta-(deoxy)ribonucleoside molecules, with the formation of the corresponding free purine bases and pentose-1-phosphate. The chain is Purine nucleoside phosphorylase DeoD-type from Lactococcus lactis subsp. lactis (strain IL1403) (Streptococcus lactis).